The chain runs to 89 residues: MRILQLLFAIVVILLLQDAPARGFSDSQLCRNNHGHCRRLCFHMESWAGSCMNGRLRCCRFSTKQPFSNPKHSVLHTAEQDPSPSLGGT.

Positions 1-23 (MRILQLLFAIVVILLLQDAPARG) are cleaved as a signal peptide. Disulfide bonds link Cys-30/Cys-58, Cys-37/Cys-51, and Cys-41/Cys-59. Positions 66–89 (PFSNPKHSVLHTAEQDPSPSLGGT) are disordered.

This sequence belongs to the beta-defensin family. As to expression, expressed in the liver, gall bladder, kidney, small intestine, spleen, testis, ovary and male and female reproductive tracts. Not detected in the ovarian stroma and the theca and granulosa layers of the ovarian follicle.

Its subcellular location is the secreted. The protein resides in the cytoplasmic granule. Functionally, has bactericidal activity. Potent activity against E.coli, L.monocytogenes, S.typhimurium and S.pyogenes but mot against S.aureus. Its function is as follows. Has bactericidal activity. The chain is Gallinacin-13 (GAL13) from Gallus gallus (Chicken).